A 37-amino-acid chain; its full sequence is Large ribosomal subunit protein bL36 (37 aa).

Belongs to the bacterial ribosomal protein bL36 family.

In Beutenbergia cavernae (strain ATCC BAA-8 / DSM 12333 / CCUG 43141 / JCM 11478 / NBRC 16432 / NCIMB 13614 / HKI 0122), this protein is Large ribosomal subunit protein bL36.